The chain runs to 38 residues: NAD-reducing hydrogenase HoxS subunit beta (38 aa).

The protein belongs to the [NiFe]/[NiFeSe] hydrogenase large subunit family. Tetramer of an alpha and a gamma subunits (flavin-containing dimer), and a delta and a nickel-containing beta subunits (hydrogenase dimer). The cofactor is FMN. It depends on Ni(2+) as a cofactor.

It localises to the cytoplasm. It catalyses the reaction H2 + NAD(+) = NADH + H(+). This is NAD-reducing hydrogenase HoxS subunit beta (hoxH) from Rhodococcus opacus (Nocardia opaca).